The chain runs to 175 residues: Early E1A protein (175 aa).

The interval Pro40 to Leu48 is interaction with RB1 in competition with E2F1. An LXCXE motif, interaction with host RB1 motif is present at residues Leu106–Glu110. A zinc finger lies at Cys146–Cys164.

It belongs to the adenoviridae E1A protein family. In terms of assembly, interacts with host UBE2I; this interaction interferes with polySUMOylation. Interacts with host RB1; this interaction induces the aberrant dissociation of RB1-E2F1 complex thereby disrupting the activity of RB1 and activating E2F1-regulated genes. Interacts with host ATF7; the interaction enhances ATF7-mediated viral transactivation activity which requires the zinc binding domains of both proteins. Isoform early E1A 32 kDa protein and isoform early E1A 26 kDa protein interact (via N-terminus) with CUL1 and E3 ubiquitin ligase RBX1; these interactions inhibit RBX1-CUL1-dependent elongation reaction of ubiquitin chains and attenuate ubiquitination of SCF(FBXW7) target proteins. Interacts (via PXLXP motif) with host ZMYND11/BS69 (via MYND-type zinc finger); this interaction inhibits E1A mediated transactivation. Interacts with host EP300; this interaction stimulates the acetylation of RB1 by recruiting EP300 and RB1 into a multimeric-protein complex. Interacts with host CTBP1 and CTBP2; this interaction seems to potentiate viral replication. Interacts with host DCAF7. Interacts with host DYRK1A. Interacts with host KPNA4; this interaction allows E1A import into the host nucleus. Interacts with host EP400; this interaction stabilizes MYC. Interacts with host TBP protein; this interaction probably disrupts the TBP-TATA complex.

It localises to the host nucleus. Functionally, plays a role in viral genome replication by driving entry of quiescent cells into the cell cycle. Stimulation of progression from G1 to S phase allows the virus to efficiently use the cellular DNA replicating machinery to achieve viral genome replication. E1A protein has both transforming and trans-activating activities. Induces the disassembly of the E2F1 transcription factor from RB1 by direct competition for the same binding site on RB1, with subsequent transcriptional activation of E2F1-regulated S-phase genes and of the E2 region of the adenoviral genome. Release of E2F1 leads to the ARF-mediated inhibition of MDM2 and causes TP53/p53 to accumulate because it is not targeted for degradation by MDM2-mediated ubiquitination anymore. This increase in TP53, in turn, would arrest the cell proliferation and direct its death but this effect is counteracted by the viral protein E1B-55K. Inactivation of the ability of RB1 to arrest the cell cycle is critical for cellular transformation, uncontrolled cellular growth and proliferation induced by viral infection. Interaction with RBX1 and CUL1 inhibits ubiquitination of the proteins targeted by SCF(FBXW7) ubiquitin ligase complex, and may be linked to unregulated host cell proliferation. The tumorigenesis-restraining activity of E1A may be related to the disruption of the host CtBP-CtIP complex through the CtBP binding motif. The sequence is that of Early E1A protein from Canis lupus familiaris (Dog).